The sequence spans 25 residues: Hemocyanin subunit 2 (25 aa).

Belongs to the tyrosinase family. Hemocyanin subfamily. In terms of tissue distribution, hemolymph.

The protein localises to the secreted. It is found in the extracellular space. Hemocyanins are copper-containing oxygen carriers occurring freely dissolved in the hemolymph of many mollusks and arthropods. The chain is Hemocyanin subunit 2 from Carcinus maenas (Common shore crab).